We begin with the raw amino-acid sequence, 438 residues long: Serine hydroxymethyltransferase (438 aa).

Residues leucine 133 and 137 to 139 (GHL) contribute to the (6S)-5,6,7,8-tetrahydrofolate site. At lysine 242 the chain carries N6-(pyridoxal phosphate)lysine.

The protein belongs to the SHMT family. Homodimer. Pyridoxal 5'-phosphate serves as cofactor.

Its subcellular location is the cytoplasm. The catalysed reaction is (6R)-5,10-methylene-5,6,7,8-tetrahydrofolate + glycine + H2O = (6S)-5,6,7,8-tetrahydrofolate + L-serine. It participates in one-carbon metabolism; tetrahydrofolate interconversion. It functions in the pathway amino-acid biosynthesis; glycine biosynthesis; glycine from L-serine: step 1/1. Its function is as follows. Catalyzes the reversible interconversion of serine and glycine with tetrahydrofolate (THF) serving as the one-carbon carrier. This reaction serves as the major source of one-carbon groups required for the biosynthesis of purines, thymidylate, methionine, and other important biomolecules. Also exhibits THF-independent aldolase activity toward beta-hydroxyamino acids, producing glycine and aldehydes, via a retro-aldol mechanism. The protein is Serine hydroxymethyltransferase of Brucella ovis (strain ATCC 25840 / 63/290 / NCTC 10512).